The sequence spans 862 residues: Chaperone protein ClpB 1 (862 aa).

The Clp R domain maps to Ala5 to Asn147. Repeat stretches follow at residues Phe8–Leu72 and Leu84–Asn147. The interval Glu160 to Gln341 is NBD1. Gly207–Thr214 is a binding site for ATP. Residues Pro342 to Gly550 are linker. Residues Ile392–Gly526 adopt a coiled-coil conformation. The interval Glu560 to Ser771 is NBD2. Residue Gly610–Thr617 participates in ATP binding. Positions Leu772–Ser862 are C-terminal.

It belongs to the ClpA/ClpB family. As to quaternary structure, homohexamer. The oligomerization is ATP-dependent.

Its subcellular location is the cytoplasm. Part of a stress-induced multi-chaperone system, it is involved in the recovery of the cell from heat-induced damage, in cooperation with DnaK, DnaJ and GrpE. Acts before DnaK, in the processing of protein aggregates. Protein binding stimulates the ATPase activity; ATP hydrolysis unfolds the denatured protein aggregates, which probably helps expose new hydrophobic binding sites on the surface of ClpB-bound aggregates, contributing to the solubilization and refolding of denatured protein aggregates by DnaK. The chain is Chaperone protein ClpB 1 (clpB1) from Parasynechococcus marenigrum (strain WH8102).